The primary structure comprises 209 residues: Uracil phosphoribosyltransferase (209 aa).

Residues Arg-79, Arg-104, and 131–139 (DPMLATGGS) each bind 5-phospho-alpha-D-ribose 1-diphosphate. Residues Ile-194 and 199-201 (GDA) each bind uracil. Asp-200 contacts 5-phospho-alpha-D-ribose 1-diphosphate.

Belongs to the UPRTase family. Requires Mg(2+) as cofactor.

It catalyses the reaction UMP + diphosphate = 5-phospho-alpha-D-ribose 1-diphosphate + uracil. It participates in pyrimidine metabolism; UMP biosynthesis via salvage pathway; UMP from uracil: step 1/1. Its activity is regulated as follows. Allosterically activated by GTP. Its function is as follows. Catalyzes the conversion of uracil and 5-phospho-alpha-D-ribose 1-diphosphate (PRPP) to UMP and diphosphate. The sequence is that of Uracil phosphoribosyltransferase from Listeria monocytogenes serovar 1/2a (strain ATCC BAA-679 / EGD-e).